Here is a 53-residue protein sequence, read N- to C-terminus: Zinc metalloproteinase-disintegrin-like alborhagin (53 aa).

It belongs to the venom metalloproteinase (M12B) family. P-III subfamily. P-IIIb sub-subfamily. Monomer. It depends on Zn(2+) as a cofactor. In terms of processing, contains numerous disulfide bonds. Post-translationally, glycosylated. Expressed by the venom gland.

It localises to the secreted. Alborhagin-induced platelet aggregation, but not shape change, is inhibited by EDTA, suggesting that the platelet activation (shape change) is independent of divalent cation or metalloproteinase activity. In terms of biological role, induces platelet activation and glycoprotein VI (GP6)-dependent platelet aggregation. Induces ectodomain cleavage of GP6 by activating endogenous platelet metalloproteinases (probably ADAM10). Has fibrinogenolytic activity against the alpha chain of fibrinogen (FGA). Recognizes distinct binding sites as convulxin, since alborhagin has minimal effect on convulxin binding to GPVI-expressing cells. Functionally, disintegrin alborhagin-C: 42 kDa fragment of alborhagin autoproteolysed that does not show platelet activation. This is Zinc metalloproteinase-disintegrin-like alborhagin from Trimeresurus albolabris (White-lipped pit viper).